The primary structure comprises 348 residues: 4-hydroxy-3-methylbut-2-en-1-yl diphosphate synthase (flavodoxin) (348 aa).

Residues C263, C266, C298, and E305 each contribute to the [4Fe-4S] cluster site.

This sequence belongs to the IspG family. [4Fe-4S] cluster serves as cofactor.

The catalysed reaction is (2E)-4-hydroxy-3-methylbut-2-enyl diphosphate + oxidized [flavodoxin] + H2O + 2 H(+) = 2-C-methyl-D-erythritol 2,4-cyclic diphosphate + reduced [flavodoxin]. The protein operates within isoprenoid biosynthesis; isopentenyl diphosphate biosynthesis via DXP pathway; isopentenyl diphosphate from 1-deoxy-D-xylulose 5-phosphate: step 5/6. Its function is as follows. Converts 2C-methyl-D-erythritol 2,4-cyclodiphosphate (ME-2,4cPP) into 1-hydroxy-2-methyl-2-(E)-butenyl 4-diphosphate. The polypeptide is 4-hydroxy-3-methylbut-2-en-1-yl diphosphate synthase (flavodoxin) (Dehalococcoides mccartyi (strain ATCC BAA-2100 / JCM 16839 / KCTC 5957 / BAV1)).